Here is an 801-residue protein sequence, read N- to C-terminus: Cation/H(+) antiporter 7 (801 aa).

Transmembrane regions (helical) follow at residues 58–78, 83–103, 128–148, 154–174, 192–212, 223–243, 254–274, 287–307, 312–332, 340–360, 377–397, 407–427, and 438–458; these read PNLE…EILF, IPIP…LFSY, GAFG…VGML, RAAL…YILM, EIIL…LTDL, VQSC…GTVL, IVIV…MLWI, VYIY…LNFF, YGWF…SALI, VGVL…ISWL, AISV…ITAF, IVLA…LGYI, and FTIA…AIEF.

The protein belongs to the monovalent cation:proton antiporter 2 (CPA2) transporter (TC 2.A.37) family. CHX (TC 2.A.37.4) subfamily. Expressed in pollen.

Its subcellular location is the membrane. Functionally, may operate as a cation/H(+) antiporter. This is Cation/H(+) antiporter 7 (CHX7) from Arabidopsis thaliana (Mouse-ear cress).